We begin with the raw amino-acid sequence, 102 residues long: Putative pterin-4-alpha-carbinolamine dehydratase (102 aa).

The protein belongs to the pterin-4-alpha-carbinolamine dehydratase family.

It carries out the reaction (4aS,6R)-4a-hydroxy-L-erythro-5,6,7,8-tetrahydrobiopterin = (6R)-L-erythro-6,7-dihydrobiopterin + H2O. The polypeptide is Putative pterin-4-alpha-carbinolamine dehydratase (Burkholderia lata (strain ATCC 17760 / DSM 23089 / LMG 22485 / NCIMB 9086 / R18194 / 383)).